We begin with the raw amino-acid sequence, 251 residues long: PF03932 family protein CutC (251 aa).

This sequence belongs to the CutC family.

The protein resides in the cytoplasm. This is PF03932 family protein CutC from Bacteroides fragilis (strain ATCC 25285 / DSM 2151 / CCUG 4856 / JCM 11019 / LMG 10263 / NCTC 9343 / Onslow / VPI 2553 / EN-2).